The following is a 228-amino-acid chain: MKKKAVILLSGGPDSTTVLEIVSKTDYEIYALSFNYHRRNSLEVQKIQGLIKDYNVKQHRVINIDLQSFIGSALTDDNIDVPKFKNTDQLPSDIPVTYVPARNTIFLSYALGVAEVIGARDIFIGVHTNDYTNYPDCRPEYIKSFEAMANLATRVGVNGEKITIHAPLINMTKEQIIKKGLELGVDYSKTISCYDPTEDGLSCGQCLSCIVRLDAFKKNNVQDPIQYV.

Position 9 to 19 (9 to 19) interacts with ATP; sequence LSGGPDSTTVL. Zn(2+) is bound by residues Cys-193, Cys-203, Cys-206, and Cys-209.

This sequence belongs to the QueC family. Requires Zn(2+) as cofactor.

The catalysed reaction is 7-carboxy-7-deazaguanine + NH4(+) + ATP = 7-cyano-7-deazaguanine + ADP + phosphate + H2O + H(+). It functions in the pathway purine metabolism; 7-cyano-7-deazaguanine biosynthesis. Catalyzes the ATP-dependent conversion of 7-carboxy-7-deazaguanine (CDG) to 7-cyano-7-deazaguanine (preQ(0)). In Rickettsia rickettsii (strain Iowa), this protein is 7-cyano-7-deazaguanine synthase.